Here is a 199-residue protein sequence, read N- to C-terminus: Thymidylate kinase (199 aa).

Gly-7–Thr-14 is an ATP binding site.

The protein belongs to the thymidylate kinase family.

The enzyme catalyses dTMP + ATP = dTDP + ADP. Functionally, phosphorylation of dTMP to form dTDP in both de novo and salvage pathways of dTTP synthesis. This chain is Thymidylate kinase, found in Acinetobacter baumannii (strain ATCC 17978 / DSM 105126 / CIP 53.77 / LMG 1025 / NCDC KC755 / 5377).